The sequence spans 892 residues: Formin-like protein 8 (892 aa).

Residues methionine 1–alanine 23 form the signal peptide. The disordered stretch occupies residues phenylalanine 43–glycine 119. The segment covering tryptophan 47–proline 59 has biased composition (pro residues). Residues threonine 87–glycine 111 are compositionally biased toward low complexity. Residues isoleucine 126 to phenylalanine 146 form a helical membrane-spanning segment. Residues proline 188–lysine 457 form a disordered region. Residues leucine 210–proline 230 show a composition bias toward basic and acidic residues. Low complexity-rich tracts occupy residues alanine 268–serine 286, phenylalanine 297–alanine 306, and arginine 321–proline 330. Positions serine 339–valine 383 are enriched in pro residues. Polar residues predominate over residues alanine 424–methionine 436. Residues aspartate 446 to alanine 867 form the FH2 domain.

The protein belongs to the formin-like family. Class-I subfamily.

The protein localises to the membrane. The polypeptide is Formin-like protein 8 (FH8) (Oryza sativa subsp. japonica (Rice)).